The following is a 167-amino-acid chain: Urease accessory protein UreE (167 aa).

Residues 135–167 are disordered; that stretch reads SGAYGGGHHHSHSHHEGDEFHSKPRLHHFGGSQ. Over residues 157–167 the composition is skewed to basic residues; the sequence is KPRLHHFGGSQ.

The protein belongs to the UreE family.

Its subcellular location is the cytoplasm. Involved in urease metallocenter assembly. Binds nickel. Probably functions as a nickel donor during metallocenter assembly. The protein is Urease accessory protein UreE of Nitrosococcus oceani (strain ATCC 19707 / BCRC 17464 / JCM 30415 / NCIMB 11848 / C-107).